Reading from the N-terminus, the 177-residue chain is Ribosome rescue factor SmrB (177 aa).

Residues 98–173 (LDMHGMKQDE…GAGAILVLLS (76 aa)) enclose the Smr domain.

This sequence belongs to the SmrB family. As to quaternary structure, associates with collided ribosomes, but not with correctly translating polysomes.

Its function is as follows. Acts as a ribosome collision sensor. Detects stalled/collided disomes (pairs of ribosomes where the leading ribosome is stalled and a second ribosome has collided with it) and endonucleolytically cleaves mRNA at the 5' boundary of the stalled ribosome. Stalled/collided disomes form a new interface (primarily via the 30S subunits) that binds SmrB. Cleaved mRNA becomes available for tmRNA ligation, leading to ribosomal subunit dissociation and rescue of stalled ribosomes. The chain is Ribosome rescue factor SmrB from Aliivibrio fischeri (strain ATCC 700601 / ES114) (Vibrio fischeri).